Here is a 516-residue protein sequence, read N- to C-terminus: D-aminopeptidase (516 aa).

The active-site Nucleophile is the S61. The active-site Proton donor/acceptor is K64. An important for specificity region spans residues 476–486; sequence RRSMDAPAPGD. Substrate is bound at residue D480.

It belongs to the peptidase S12 family. As to quaternary structure, homodimer.

The enzyme catalyses Release of an N-terminal D-amino acid from a peptide, Xaa-|-Yaa-, in which Xaa is preferably D-Ala, D-Ser or D-Thr. D-amino acid amides and methyl esters also are hydrolyzed, as is glycine amide.. Its activity is regulated as follows. Inhibited by beta-lactam compounds such as 6-aminopenicillic acid, 7-aminocephalosporanic acid, benzylpenicillin and ampicillin. Inhibited by p-chloromercuribenzoate. In terms of biological role, hydrolyzes N-terminal residues in D-amino acid-containing peptides. The sequence is that of D-aminopeptidase from Cereibacter sphaeroides (strain ATCC 17023 / DSM 158 / JCM 6121 / CCUG 31486 / LMG 2827 / NBRC 12203 / NCIMB 8253 / ATH 2.4.1.) (Rhodobacter sphaeroides).